Here is a 100-residue protein sequence, read N- to C-terminus: Small ribosomal subunit protein bS18c (100 aa).

A disordered region spans residues 81–100 (KQFERTESTPRTTGPRTRKK). Residues 89–100 (TPRTTGPRTRKK) show a composition bias toward low complexity.

It belongs to the bacterial ribosomal protein bS18 family. As to quaternary structure, part of the 30S ribosomal subunit.

It is found in the plastid. The protein resides in the chloroplast. The polypeptide is Small ribosomal subunit protein bS18c (Nandina domestica (Heavenly bamboo)).